A 258-amino-acid chain; its full sequence is 5'-nucleotidase SurE (258 aa).

A divalent metal cation-binding residues include Asp9, Asp10, Ser42, and Asn96.

It belongs to the SurE nucleotidase family. A divalent metal cation is required as a cofactor.

The protein resides in the cytoplasm. It catalyses the reaction a ribonucleoside 5'-phosphate + H2O = a ribonucleoside + phosphate. Functionally, nucleotidase that shows phosphatase activity on nucleoside 5'-monophosphates. This chain is 5'-nucleotidase SurE, found in Campylobacter jejuni subsp. doylei (strain ATCC BAA-1458 / RM4099 / 269.97).